The sequence spans 313 residues: Protein FixB (313 aa).

Residue 255–283 (LYLAVGISGQIQHMVGANASQTIFAINKD) participates in FAD binding.

It belongs to the ETF alpha-subunit/FixB family. In terms of assembly, heterodimer of FixA and FixB.

Its pathway is amine and polyamine metabolism; carnitine metabolism. In terms of biological role, required for anaerobic carnitine reduction. May bring reductant to CaiA. The chain is Protein FixB from Escherichia coli O8 (strain IAI1).